The following is a 60-amino-acid chain: DNA gyrase inhibitor YacG (60 aa).

The Zn(2+) site is built by cysteine 15, cysteine 18, cysteine 30, and cysteine 34.

The protein belongs to the DNA gyrase inhibitor YacG family. Interacts with GyrB. Zn(2+) serves as cofactor.

Functionally, inhibits all the catalytic activities of DNA gyrase by preventing its interaction with DNA. Acts by binding directly to the C-terminal domain of GyrB, which probably disrupts DNA binding by the gyrase. The protein is DNA gyrase inhibitor YacG of Nitrobacter hamburgensis (strain DSM 10229 / NCIMB 13809 / X14).